The following is a 484-amino-acid chain: Adenylosuccinate lyase (484 aa).

Ala-2 is modified (N-acetylalanine). Substrate-binding positions include 20-21 (RY), 85-87 (RHD), and 111-112 (TS). Lys-147 is subject to N6-acetyllysine. The Proton donor/acceptor role is filled by His-159. Gln-241 lines the substrate pocket. Ser-289 acts as the Proton donor/acceptor in catalysis. Position 295 is an N6-acetyllysine (Lys-295). Residues Arg-303, Arg-329, Ser-334, and Arg-338 each contribute to the substrate site. Lys-415 participates in a covalent cross-link: Glycyl lysine isopeptide (Lys-Gly) (interchain with G-Cter in SUMO1).

It belongs to the lyase 1 family. Adenylosuccinate lyase subfamily. Homotetramer. Residues from neighboring subunits contribute catalytic and substrate-binding residues to each active site.

It catalyses the reaction N(6)-(1,2-dicarboxyethyl)-AMP = fumarate + AMP. It carries out the reaction (2S)-2-[5-amino-1-(5-phospho-beta-D-ribosyl)imidazole-4-carboxamido]succinate = 5-amino-1-(5-phospho-beta-D-ribosyl)imidazole-4-carboxamide + fumarate. It functions in the pathway purine metabolism; AMP biosynthesis via de novo pathway; AMP from IMP: step 2/2. Its pathway is purine metabolism; IMP biosynthesis via de novo pathway; 5-amino-1-(5-phospho-D-ribosyl)imidazole-4-carboxamide from 5-amino-1-(5-phospho-D-ribosyl)imidazole-4-carboxylate: step 2/2. Functionally, catalyzes two non-sequential steps in de novo AMP synthesis: converts (S)-2-(5-amino-1-(5-phospho-D-ribosyl)imidazole-4-carboxamido)succinate (SAICAR) to fumarate plus 5-amino-1-(5-phospho-D-ribosyl)imidazole-4-carboxamide, and thereby also contributes to de novo IMP synthesis, and converts succinyladenosine monophosphate (SAMP) to AMP and fumarate. This is Adenylosuccinate lyase (ADSL) from Macaca fascicularis (Crab-eating macaque).